We begin with the raw amino-acid sequence, 162 residues long: Putative ripening-related protein 7 (162 aa).

The first 30 residues, 1 to 30 (MAAAAASTKIVAVVVAVLLAILEMPSCAVA), serve as a signal peptide directing secretion.

Belongs to the kiwellin family.

Its subcellular location is the secreted. The protein is Putative ripening-related protein 7 of Oryza sativa subsp. japonica (Rice).